Here is a 458-residue protein sequence, read N- to C-terminus: Cysteine protease ATG4C (458 aa).

Position 1 is an N-acetylmethionine (Met1). Catalysis depends on Cys111, which acts as the Nucleophile. Residues Asp345 and His347 contribute to the active site. Position 451 is a phosphoserine (Ser451). Residue Thr452 is modified to Phosphothreonine.

It belongs to the peptidase C54 family.

Its subcellular location is the cytoplasm. The catalysed reaction is [protein]-C-terminal L-amino acid-glycyl-phosphatidylethanolamide + H2O = [protein]-C-terminal L-amino acid-glycine + a 1,2-diacyl-sn-glycero-3-phosphoethanolamine. Inhibited by N-ethylmaleimide. In terms of biological role, cysteine protease that plays a key role in autophagy by mediating both proteolytic activation and delipidation of ATG8 family proteins. The protease activity is required for proteolytic activation of ATG8 family proteins: cleaves the C-terminal amino acid of ATG8 proteins MAP1LC3 and GABARAPL2, to reveal a C-terminal glycine. Exposure of the glycine at the C-terminus is essential for ATG8 proteins conjugation to phosphatidylethanolamine (PE) and insertion to membranes, which is necessary for autophagy. In addition to the protease activity, also mediates delipidation of ATG8 family proteins. Catalyzes delipidation of PE-conjugated forms of ATG8 proteins during macroautophagy. Compared to ATG4B, the major protein for proteolytic activation of ATG8 proteins, shows weaker ability to cleave the C-terminal amino acid of ATG8 proteins, while it displays stronger delipidation activity. In contrast to other members of the family, weakly or not involved in phagophore growth during mitophagy. The protein is Cysteine protease ATG4C of Mus musculus (Mouse).